We begin with the raw amino-acid sequence, 206 residues long: Small ribosomal subunit protein uS4 (206 aa).

Residues 94–157 form the S4 RNA-binding domain; the sequence is RRLDNVVYRL…RRRTYFKNLI (64 aa).

This sequence belongs to the universal ribosomal protein uS4 family. As to quaternary structure, part of the 30S ribosomal subunit. Contacts protein S5. The interaction surface between S4 and S5 is involved in control of translational fidelity.

Its function is as follows. One of the primary rRNA binding proteins, it binds directly to 16S rRNA where it nucleates assembly of the body of the 30S subunit. With S5 and S12 plays an important role in translational accuracy. The polypeptide is Small ribosomal subunit protein uS4 (Roseiflexus sp. (strain RS-1)).